The sequence spans 133 residues: Large ribosomal subunit protein bL21 (133 aa).

Positions 1 to 22 (MAEKPAAKPKAAAAKAEAKDQS) are disordered.

The protein belongs to the bacterial ribosomal protein bL21 family. Part of the 50S ribosomal subunit. Contacts protein L20.

Its function is as follows. This protein binds to 23S rRNA in the presence of protein L20. The polypeptide is Large ribosomal subunit protein bL21 (Prochlorococcus marinus (strain MIT 9303)).